The sequence spans 553 residues: MSDIALTVSILALVAVVGLFIGNVKFRGIGLGIGGVLFGGIIVGHFVSQAGMTLSSDMLHVIQEFGLILFVYTIGIQVGPGFFASLRVSGLRLNLFAVLIVIIGGLVTAILHKLFDIPLPVVLGIFSGAVTNTPALGAGQQILRDLGTPMEMVDQMGMSYAMAYPFGICGILFTMWMLRVIFRVNVETEAQQHESSRTNGGALIKTINIRVENPNLHDLAIKDVPILNGDKIICSRLKREETLKVPSPDTIIQLGDLLHLVGQPADLHNAQLVIGQEVDTSLSTKDTDLRVERVVVTNENVLGKRIRDLHFKERYDVVISRLNRAGVELVASGDISLQFGDILNLVGRPSAIDAVANVLGNAQQKLQQVQMLPVFIGIGLGVLLGSIPVFVPGFPAALKLGLAGGLLIMALILGRIGSIGKLYWFMPPSANLALRELGIVLFLSVVGLKSGGDFVNTLVNGEGLSWIGYGALITAVPLITVGILARMLAKMNYLTMCGMLAGSMTDPPALAFANNLHPTSGAAALSYATVYPLVMFLRIITPQLLAVLFWSIG.

5 helical membrane passes run 4-24 (IALT…IGNV), 28-48 (GIGL…HFVS), 65-85 (FGLI…FFAS), 95-115 (LFAV…HKLF), and 158-178 (MSYA…MWML). RCK C-terminal domains lie at 191–276 (QQHE…VIGQ) and 279–361 (DTSL…VLGN). 6 helical membrane-spanning segments follow: residues 371–391 (MLPV…PVFV), 393–413 (GFPA…ALIL), 431–448 (NLAL…VVGL), 464–484 (LSWI…VGIL), 493–513 (YLTM…LAFA), and 533–553 (LVMF…WSIG).

Belongs to the AAE transporter (TC 2.A.81) family. YidE subfamily.

It localises to the cell membrane. In Shigella sonnei (strain Ss046), this protein is Putative transport protein YidE.